A 497-amino-acid chain; its full sequence is Glycerol kinase (497 aa).

Thr-11 provides a ligand contact to ADP. ATP-binding residues include Thr-11, Ser-12, and Ser-13. Thr-11 lines the sn-glycerol 3-phosphate pocket. ADP is bound at residue Arg-15. Residues Arg-81, Glu-82, Tyr-133, and Asp-242 each coordinate sn-glycerol 3-phosphate. Glycerol-binding residues include Arg-81, Glu-82, Tyr-133, Asp-242, and Gln-243. 2 residues coordinate ADP: Thr-264 and Gly-307. Residues Thr-264, Gly-307, Gln-311, and Gly-412 each contribute to the ATP site. Residues Gly-412 and Asn-416 each contribute to the ADP site.

The protein belongs to the FGGY kinase family.

The enzyme catalyses glycerol + ATP = sn-glycerol 3-phosphate + ADP + H(+). The protein operates within polyol metabolism; glycerol degradation via glycerol kinase pathway; sn-glycerol 3-phosphate from glycerol: step 1/1. With respect to regulation, inhibited by fructose 1,6-bisphosphate (FBP). Its function is as follows. Key enzyme in the regulation of glycerol uptake and metabolism. Catalyzes the phosphorylation of glycerol to yield sn-glycerol 3-phosphate. In Polaromonas sp. (strain JS666 / ATCC BAA-500), this protein is Glycerol kinase.